Reading from the N-terminus, the 284-residue chain is tRNA uridine(34) hydroxylase (284 aa).

The 95-residue stretch at 132–226 (DGRPVVMLDT…YFEEVGGAHY (95 aa)) folds into the Rhodanese domain. Catalysis depends on cysteine 186, which acts as the Cysteine persulfide intermediate.

This sequence belongs to the TrhO family.

The catalysed reaction is uridine(34) in tRNA + AH2 + O2 = 5-hydroxyuridine(34) in tRNA + A + H2O. Catalyzes oxygen-dependent 5-hydroxyuridine (ho5U) modification at position 34 in tRNAs. This Burkholderia vietnamiensis (strain G4 / LMG 22486) (Burkholderia cepacia (strain R1808)) protein is tRNA uridine(34) hydroxylase.